Consider the following 436-residue polypeptide: GTPase Der (436 aa).

EngA-type G domains lie at 4-167 (PVVA…KNIP) and 176-351 (VQFC…ENHS). Residues 10–17 (GRPNVGKS), 57–61 (DTGGI), 119–122 (NKVD), 182–189 (GRPNVGKS), 229–233 (DTAGM), and 294–297 (NKWD) each bind GTP. Positions 352–436 (MRVQTNILND…PIRIFARARK (85 aa)) constitute a KH-like domain.

This sequence belongs to the TRAFAC class TrmE-Era-EngA-EngB-Septin-like GTPase superfamily. EngA (Der) GTPase family. In terms of assembly, associates with the 50S ribosomal subunit.

Functionally, GTPase that plays an essential role in the late steps of ribosome biogenesis. This is GTPase Der from Bacillus licheniformis (strain ATCC 14580 / DSM 13 / JCM 2505 / CCUG 7422 / NBRC 12200 / NCIMB 9375 / NCTC 10341 / NRRL NRS-1264 / Gibson 46).